Consider the following 835-residue polypeptide: Protein translocase subunit SecA (835 aa).

ATP is bound by residues Gln85, 103–107 (GEGKT), and Asp495. Residues 806 to 835 (KVFLNNDSSDDESSKKRRTRKVRTSKKPWN) form a disordered region. Positions 820 to 835 (KKRRTRKVRTSKKPWN) are enriched in basic residues.

It belongs to the SecA family. Monomer and homodimer. Part of the essential Sec protein translocation apparatus which comprises SecA, SecYEG and auxiliary proteins SecDF. Other proteins may also be involved.

The protein resides in the cell membrane. Its subcellular location is the cytoplasm. The enzyme catalyses ATP + H2O + cellular proteinSide 1 = ADP + phosphate + cellular proteinSide 2.. Its function is as follows. Part of the Sec protein translocase complex. Interacts with the SecYEG preprotein conducting channel. Has a central role in coupling the hydrolysis of ATP to the transfer of proteins into and across the cell membrane, serving as an ATP-driven molecular motor driving the stepwise translocation of polypeptide chains across the membrane. This chain is Protein translocase subunit SecA, found in Onion yellows phytoplasma (strain OY-M).